The sequence spans 461 residues: D-phenylhydantoinase (461 aa).

Residues His59, His61, and Lys151 each coordinate a divalent metal cation. Lys151 carries the N6-carboxylysine modification. Substrate is bound at residue Tyr156. The a divalent metal cation site is built by His182 and His239. Ser286 contributes to the substrate binding site. Asp313 serves as a coordination point for a divalent metal cation. Asn335 is a substrate binding site.

Belongs to the metallo-dependent hydrolases superfamily. Hydantoinase/dihydropyrimidinase family. As to quaternary structure, homotetramer. The cofactor is a divalent metal cation. Post-translationally, carboxylation allows a single lysine to coordinate two divalent metal cations.

The catalysed reaction is D-5-phenylhydantoin + H2O = N-carbamoyl-D-phenylglycine + H(+). In terms of biological role, catalyzes the stereospecific hydrolysis of the cyclic amide bond of D-hydantoin derivatives with an aromatic side chains at the 5'-position. Has no activity on dihydropyrimidines. The physiological function is unknown. The sequence is that of D-phenylhydantoinase from Escherichia coli O127:H6 (strain E2348/69 / EPEC).